Consider the following 471-residue polypeptide: Transcription initiation factor TFIID subunit 7-like (471 aa).

3 disordered regions span residues 1–84, 192–211, and 328–377; these read MERG…RQGT, SPEG…TGPT, and EMMG…EELE. Serine 199 carries the post-translational modification Phosphoserine. Acidic residues predominate over residues 347–377; that stretch reads GDDDDDEDEDDEDYGNEKEEEETDNSEEELE. The stretch at 358-433 forms a coiled coil; it reads EDYGNEKEEE…QKELLRKVEN (76 aa).

This sequence belongs to the TAF7 family. TFIID is composed of TATA binding protein (TBP) and a number of TBP-associated factors (TAFs). TAF7L may replace TAF7 in a spermatogenesis-specific form of TFIID. Interacts with TBP; the interaction occurs in a sub-population of cells (pachytene and haploid round spermatids) and is developmentally regulated through differential intracellular localization of the two proteins. Interacts with TAF1. As to expression, testis-specific (at protein level). Expressed during spermatogenesis from spermatogonia stage up to the stage of round spermatids.

It localises to the nucleus. Its subcellular location is the cytoplasm. Functionally, probably functions as a spermatogenesis-specific component of the DNA-binding general transcription factor complex TFIID, a multimeric protein complex that plays a central role in mediating promoter responses to various activators and repressors. May play a role in spermatogenesis. The polypeptide is Transcription initiation factor TFIID subunit 7-like (Taf7l) (Mus musculus (Mouse)).